Reading from the N-terminus, the 1829-residue chain is MSTEEDPSLVDAEESMEEGSVTQDATEETEEEEEQEQGDEAGPSERKRSSRKKGGKGGKKGSKKSAAAASKVEIPDPYNSTSEEVCAAIGLTDVEFDYDEEEFQGISNLKTFSSIIKPQILEANPGTNVSKMYPMFQVKYKEYQDHMAAQGKPVQKQARGSKTPAVSTPVIPPRSAPTKTRSARRKRRDSDAPDSDQEFEAFIKQQEQLEDDLVKDKEDARIKRAAEREEKKKGALEAARAAKKAKLEKGEEAENNDYCEECKQDGELLLCDTCPRAYHTVCIDENMEEPPEGDWSCAHCIEHGPEVVKEEPAKQNDEFCKICKETENLLLCDSCVCSFHAYCIDPPLTEVPKEETWSCPRCETVKPEHKIEKILCWRWKEIPYPEPLEAGKEASSDDAMLKPPRKMEPRREREFFVKWKYLSYWQCSWVSEMLLEVHFRMLILLYWRKNDSDAPPEFEESVTSRHHSDNDPYKLRERFYQYGIKPEWMQIHRIINHQSYAKSQQDYLVKWKELSYDQATWERDDSNIANYEEAIIKYWQHRESKLNEDIPKNVQKMIAKHREAKGLPPKEDEKKKKKREKIDIRKKYEVQPDYVTETGGKLHPYQLEGLNWLRHCWSNGTDAILADEMGLGKTVQSLTFLYSLMKEGHCKGPFLIAAPLSTIINWEREAEQWCPDFYVVTYVGLRDARVVLREHEFSFVEGAVRSGPKASKMKTTENMKFHVLLTSYETINMDKTILSSIEWGALVVDEAHRLKNNQSLFFKNLNEYTIHYRVLLTGTPLQNNLEELFHLLNFLSKERFNQLEAFTAEFNEISKEDQIEKLHNLLGPHMLRRLKADVLTGMPSKSELIVRVELSAMQKKWYKNILTRNFDALNVKNGGTQMSLMNVLMELKKCCNHPYLFVKAELEAPKEKNGMYEGTALIKNSGKFVLLQKMLRKLKDGGHRVLIFSQMTRMLDIMEDLCEYEGYRYERIDGSIMGQMRQDAIDRYNAPGAQQFIFLLSTRAGGLGINLATADTVIIYDSDWNPHNDIQAFSRAHRLGQKHKVMIYRFVTKKSVEEKITSVAKKKMLLNHLVVRAGLGGKEGKTMSKTELDDVLRWGTEELFSEDLDAAEGEGSEKKGAAAQEIVWDDAAVDALLDRSNKEETPAGEDGEEKAEWQNEYLSSFKVASYQTKETEGQEEEEEEETEVIKEDEKEPDPDYWEKLLKHHYEQDREIELQKLGKGKRVRKQINYASENMGTDWSKQNQTQDDDDDNESYRGSDNGDGLNSDEDDYDEKKKRRRDEEKMPPLMAKVNGQVEILGFNPRQRKAFYGAVMRWGMPPQDSHQSQWLVRDLRNKSEKVFRAYASLFMRHLCEPGADGHDTFNDGVPREGLNRQHVLGRIGLLSLVRRKVQEFEQYNGQWSMPEIQDEVLAKAANGSAQGSSRSTPKPKEEPKEEPMEKEDATETVNGATSEPATDAESEQNAPVDEPMDTDEAKEPKEEPIETEKPRAARPSFKFNICDGGFTELHSLWANEEKVARNGKEYEIWYRRHDYWLLAGVVVHGYGRFQANFNDIINDPRFSVLNEPFKEVGAEATGSDIKAKFMQRRFKLIEQSLVIEEQLRRAAHANRHLQPDNVGPLAQRFADLENIAESQANIAKESSAGNRNANAVLHKTLVQLDEILSDMKADVSRLPSTFTQLATVTERLNMTERQILSRLTTKDEDAIANRSVLPPPGPFVTPILRQQMDGIQPKFAALYSKFMSENGERMEEDEPVEAEEEEGVKQEPDDETQDSAEAPPVLSAEVNSDDSNDVPSTSAAAAVSSETAADAEPASAEDQAPTDEPEPMET.

Composition is skewed to acidic residues over residues 1 to 17 (MSTE…ESME) and 25 to 39 (ATEE…EQGD). Disordered stretches follow at residues 1-81 (MSTE…YNST) and 147-198 (MAAQ…SDQE). The segment covering 48 to 63 (RSSRKKGGKGGKKGSK) has biased composition (basic residues). 2 PHD-type zinc fingers span residues 256-303 (NDYC…CIEH) and 317-365 (DEFC…CETV). 2 Chromo domains span residues 401–458 (LKPP…PPEF) and 489–550 (MQIH…NEDI). The 185-residue stretch at 614–798 (RHCWSNGTDA…FHLLNFLSKE (185 aa)) folds into the Helicase ATP-binding domain. Position 627–634 (627–634 (DEMGLGKT)) interacts with ATP. The short motif at 749-752 (DEAH) is the DEAH box element. The Helicase C-terminal domain occupies 930 to 1093 (LLQKMLRKLK…GKTMSKTELD (164 aa)). Disordered regions lie at residues 1168–1198 (ASYQ…EPDP), 1234–1289 (SENM…MPPL), 1415–1495 (AANG…ARPS), and 1745–1829 (NGER…PMET). Residues 1177–1186 (GQEEEEEEET) are compositionally biased toward acidic residues. 2 stretches are compositionally biased toward polar residues: residues 1234-1247 (SENM…QNQT) and 1418-1427 (GSAQGSSRST). Over residues 1429 to 1444 (KPKEEPKEEPMEKEDA) the composition is skewed to basic and acidic residues. Residues 1446 to 1455 (ETVNGATSEP) show a composition bias toward polar residues. The segment covering 1474 to 1490 (DEAKEPKEEPIETEKPR) has biased composition (basic and acidic residues). The span at 1749 to 1773 (MEEDEPVEAEEEEGVKQEPDDETQD) shows a compositional bias: acidic residues. The segment covering 1792 to 1811 (DVPSTSAAAAVSSETAADAE) has biased composition (low complexity). Residues 1819 to 1829 (APTDEPEPMET) are compositionally biased toward acidic residues.

In terms of assembly, component of the MEC (MEP-1-containing complex) complex that contains let-418, mep-1 and hda-1. Component of a NURD complex that contains let-418, hda-1, lin-40 and lin-53. Interacts with lin-1. Interacts with pie-1. Interacts with akir-1. Expressed in embryos and larva.

It localises to the nucleus. Part of a NuRD (Nucleosome Remodeling and Deacetylase) complex which is implicated in the synMuv B pathway that negatively regulates specification of vulval cell fate. This negative regulation is thought to be mediated via interaction with the promoter of lin-39, a key regulator in vulva development, and is dependent on the presence lin-1. Contributes to negative regulation of lag-2 which is expressed in the gut during larval development. Has a broad role in development. In association with akir-1, plays a role in regulating the transcription of antimicrobial peptide genes in response to fungal infection. In Caenorhabditis elegans, this protein is Protein let-418.